Here is a 215-residue protein sequence, read N- to C-terminus: ATP-dependent dethiobiotin synthetase BioD (215 aa).

13–18 (DIGKTV) is a binding site for ATP. Thr-17 contacts Mg(2+). Lys-38 is an active-site residue. Thr-42 provides a ligand contact to substrate. ATP-binding positions include Asp-50, 115 to 118 (EGAG), and 175 to 176 (NH). Asp-50 and Glu-115 together coordinate Mg(2+).

The protein belongs to the dethiobiotin synthetase family. As to quaternary structure, homodimer. Requires Mg(2+) as cofactor.

The protein resides in the cytoplasm. The catalysed reaction is (7R,8S)-7,8-diammoniononanoate + CO2 + ATP = (4R,5S)-dethiobiotin + ADP + phosphate + 3 H(+). It participates in cofactor biosynthesis; biotin biosynthesis; biotin from 7,8-diaminononanoate: step 1/2. Catalyzes a mechanistically unusual reaction, the ATP-dependent insertion of CO2 between the N7 and N8 nitrogen atoms of 7,8-diaminopelargonic acid (DAPA, also called 7,8-diammoniononanoate) to form a ureido ring. This chain is ATP-dependent dethiobiotin synthetase BioD, found in Neisseria meningitidis serogroup C (strain 053442).